Reading from the N-terminus, the 198-residue chain is HTH-type transcriptional regulator BetI (198 aa).

Residues 8-68 (PLRRRELIDA…ATMRHLLREL (61 aa)) form the HTH tetR-type domain. The segment at residues 31–50 (TVAQIAHEAGVSPALAHHYF) is a DNA-binding region (H-T-H motif).

It participates in amine and polyamine biosynthesis; betaine biosynthesis via choline pathway [regulation]. Functionally, repressor involved in the biosynthesis of the osmoprotectant glycine betaine. It represses transcription of the choline transporter BetT and the genes of BetAB involved in the synthesis of glycine betaine. The chain is HTH-type transcriptional regulator BetI from Brucella suis (strain ATCC 23445 / NCTC 10510).